The sequence spans 353 residues: Phosphate acyltransferase (353 aa).

It belongs to the PlsX family. Homodimer. Probably interacts with PlsY.

Its subcellular location is the cytoplasm. The enzyme catalyses a fatty acyl-[ACP] + phosphate = an acyl phosphate + holo-[ACP]. It functions in the pathway lipid metabolism; phospholipid metabolism. Its function is as follows. Catalyzes the reversible formation of acyl-phosphate (acyl-PO(4)) from acyl-[acyl-carrier-protein] (acyl-ACP). This enzyme utilizes acyl-ACP as fatty acyl donor, but not acyl-CoA. This is Phosphate acyltransferase from Ralstonia pickettii (strain 12J).